We begin with the raw amino-acid sequence, 153 residues long: MVRPKPTSVLSFDYGHKRIGLAGCDPLGITVTALSPIHRISFQKDLTLIKSLCIEREIKGLIVGLPLDESGQNTVQSIHCQNYGIKIAKELDLPLAWVNEHSSSWDAGQKYNLQNDRTGKLDSAVAALLLEQWLREGPELQPVSKLDSPRIKF.

The protein belongs to the YqgF nuclease family.

It localises to the cytoplasm. Its function is as follows. Could be a nuclease involved in processing of the 5'-end of pre-16S rRNA. This Prochlorococcus marinus (strain SARG / CCMP1375 / SS120) protein is Putative pre-16S rRNA nuclease.